The chain runs to 140 residues: Large-conductance mechanosensitive channel 3 (140 aa).

A run of 3 helical transmembrane segments spans residues 8-28, 30-50, and 81-101; these read FISK…AAFG, IVTS…FGGL, and GSFI…FLMV.

Belongs to the MscL family. In terms of assembly, homopentamer.

It localises to the cell inner membrane. Functionally, channel that opens in response to stretch forces in the membrane lipid bilayer. May participate in the regulation of osmotic pressure changes within the cell. The protein is Large-conductance mechanosensitive channel 3 of Mesorhizobium japonicum (strain LMG 29417 / CECT 9101 / MAFF 303099) (Mesorhizobium loti (strain MAFF 303099)).